The sequence spans 155 residues: Probable calcium-binding protein CML44 (155 aa).

EF-hand domains follow at residues 6-41 (ITTNDLRRMFKTLDKNQDGLVTLDELLWILDKLGWA), 85-120 (DNDEAIARAFNVFDVNGDGYISAEELRDVLERLGFE), and 130-155 (RMIRVHDKNLDGFVDFEEFKNMILHV). Residues D19, N21, D23, E30, D98, N100, D102, Y104, and E109 each coordinate Ca(2+).

Potential calcium sensor. The polypeptide is Probable calcium-binding protein CML44 (CML44) (Arabidopsis thaliana (Mouse-ear cress)).